The sequence spans 356 residues: Guanine nucleotide-binding protein alpha-17 subunit (356 aa).

Residue Gly-2 is the site of N-myristoyl glycine attachment. The S-palmitoyl cysteine moiety is linked to residue Cys-4. The region spanning 32-356 (SIVKLLLLGA…QKNLQKAGMM (325 aa)) is the G-alpha domain. Positions 35–48 (KLLLLGAGECGKST) are G1 motif. Residues 40 to 47 (GAGECGKS), 177 to 183 (LYSRVAT), 202 to 206 (DVGGQ), 271 to 274 (NKKD), and Ala-328 each bind GTP. 2 residues coordinate Mg(2+): Ser-47 and Thr-183. The interval 175–183 (DILYSRVAT) is G2 motif. The G3 motif stretch occupies residues 198 to 207 (FRVFDVGGQR). Residues 267–274 (ILFMNKKD) form a G4 motif region. The segment at 326–331 (TCATDT) is G5 motif.

It belongs to the G-alpha family. G proteins are composed of 3 units; alpha, beta and gamma. The alpha chain contains the guanine nucleotide binding site. In terms of tissue distribution, expressed in sensory neurons in the head and tail. Expressed in amphid AWC neurons, to a lesser extent in AWB and weakly in AWA, ASH and ADF neurons (head sensory neurons). Expressed in phasmid PHA and PHB neurons (tail sensory neurons).

It is found in the cell projection. It localises to the cilium. The protein resides in the dendrite. Functionally, guanine nucleotide-binding proteins (G proteins) are involved as modulators or transducers in various transmembrane signaling systems. This specific G-alpha subunit plays an important role in olfaction and in cilia morphogenesis. Involved in chemotactic responses to attractants diacetyl, pyrazine, 2,4,5-trimethylthiazole, benzaldehyde, isoamyl alcohol, butanone and 2,3-pentanedione. Displays a redundant function with gpa-3 in chemotactic responses. Plays a role in the avoidance response to the noxious chemical quinine in ASH sensory neurons. Involved in avoidance responses to copper, sodium dodecyl sulfate and linoleic acid. Involved in osmotic avoidance and mechanosensory responses. Involved in specifying fan-like morphology of cilia of head sensory neurons AWC. Plays a role in the detection of preferred food sources by mediating the recognition of food odors in olfactory sensory neurons. The protein is Guanine nucleotide-binding protein alpha-17 subunit of Caenorhabditis elegans.